Reading from the N-terminus, the 193-residue chain is Rho-related GTP-binding protein RhoA-D (193 aa).

GTP-binding positions include Gly12–Thr19, Phe30–Thr37, Asp59–Gln63, Asn117–Asp120, and Ser160–Lys162. Tyr34 carries (Microbial infection) O-linked (GlcNAc) tyrosine; by Yersinia Afp18 glycosylation. Position 190 is a cysteine methyl ester (Cys190). Cys190 carries the S-geranylgeranyl cysteine lipid modification. The propeptide at Leu191–Leu193 is removed in mature form.

The protein belongs to the small GTPase superfamily. Rho family. Post-translationally, (Microbial infection) Glycosylated at Tyr-34 by Yersinia ruckeri toxin Afp18. Mono-O-GlcNAcylation by Afp18 inhibits RhoA activation by guanine nucleotide exchange factors and blocks RhoA signaling.

The protein resides in the cell membrane. Functionally, regulates a signal transduction pathway linking plasma membrane receptors to the assembly of focal adhesions and actin stress fibers. This is Rho-related GTP-binding protein RhoA-D from Danio rerio (Zebrafish).